The following is a 190-amino-acid chain: Potassium-transporting ATPase KdpC subunit (190 aa).

Residues threonine 10–glycine 30 traverse the membrane as a helical segment.

This sequence belongs to the KdpC family. The system is composed of three essential subunits: KdpA, KdpB and KdpC.

Its subcellular location is the cell inner membrane. In terms of biological role, part of the high-affinity ATP-driven potassium transport (or Kdp) system, which catalyzes the hydrolysis of ATP coupled with the electrogenic transport of potassium into the cytoplasm. This subunit acts as a catalytic chaperone that increases the ATP-binding affinity of the ATP-hydrolyzing subunit KdpB by the formation of a transient KdpB/KdpC/ATP ternary complex. This Escherichia coli O45:K1 (strain S88 / ExPEC) protein is Potassium-transporting ATPase KdpC subunit.